The chain runs to 576 residues: Arginine--tRNA ligase (576 aa).

A 'HIGH' region motif is present at residues 132-142; the sequence is ANPTGPMHIGH.

It belongs to the class-I aminoacyl-tRNA synthetase family. In terms of assembly, monomer.

Its subcellular location is the cytoplasm. It catalyses the reaction tRNA(Arg) + L-arginine + ATP = L-arginyl-tRNA(Arg) + AMP + diphosphate. The polypeptide is Arginine--tRNA ligase (Ehrlichia ruminantium (strain Gardel)).